A 381-amino-acid chain; its full sequence is Malonyl-CoA-acyl carrier protein transacylase, mitochondrial (381 aa).

Residues Ser151 and His268 contribute to the active site. N6-succinyllysine is present on Lys312.

This sequence belongs to the type II malonyltransferase family. As to expression, expressed in retinal ganglion cells.

It localises to the mitochondrion. The enzyme catalyses holo-[ACP] + malonyl-CoA = malonyl-[ACP] + CoA. It participates in lipid metabolism; fatty acid biosynthesis. Functionally, catalyzes the transfer of a malonyl moiety from malonyl-CoA to the free thiol group of the phosphopantetheine arm of the mitochondrial ACP protein (NDUFAB1). This suggests the existence of the biosynthesis of fatty acids in mitochondria. This is Malonyl-CoA-acyl carrier protein transacylase, mitochondrial from Mus musculus (Mouse).